Here is a 433-residue protein sequence, read N- to C-terminus: AP-2 complex subunit mu (433 aa).

An MHD domain is found at arginine 168–arginine 432. Positions 339, 343, and 352 each coordinate a 1,2-diacyl-sn-glycero-3-phospho-(1D-myo-inositol-3,4,5-trisphosphate).

The protein belongs to the adaptor complexes medium subunit family. As to quaternary structure, adaptor protein complex 2 (AP-2) is a heterotetramer composed of two large adaptins (alpha-type subunit and beta-type subunit), a medium adaptin (mu-type subunit) and a small adaptin (sigma-type subunit).

Its subcellular location is the cell membrane. The protein resides in the membrane. It localises to the coated pit. Component of the adaptor complexes which link clathrin to receptors in coated vesicles. Clathrin-associated protein complexes are believed to interact with the cytoplasmic tails of membrane proteins, leading to their selection and concentration. AP50 is a subunit of the plasma membrane adaptor. The complex binds polyphosphoinositide-containing lipids. The sequence is that of AP-2 complex subunit mu (AP2M1) from Gallus gallus (Chicken).